The primary structure comprises 282 residues: ATP synthase subunit a (282 aa).

The next 5 helical transmembrane spans lie at 45–65, 106–126, 160–179, 232–252, and 253–273; these read AIHV…LWLF, IAPL…MDLI, INAT…FYSI, LIFI…SVPW, and AIFH…LTIV.

The protein belongs to the ATPase A chain family. As to quaternary structure, F-type ATPases have 2 components, CF(1) - the catalytic core - and CF(0) - the membrane proton channel. CF(1) has five subunits: alpha(3), beta(3), gamma(1), delta(1), epsilon(1). CF(0) has three main subunits: a(1), b(2) and c(9-12). The alpha and beta chains form an alternating ring which encloses part of the gamma chain. CF(1) is attached to CF(0) by a central stalk formed by the gamma and epsilon chains, while a peripheral stalk is formed by the delta and b chains.

It localises to the cell inner membrane. Functionally, key component of the proton channel; it plays a direct role in the translocation of protons across the membrane. The chain is ATP synthase subunit a from Marinomonas sp. (strain MWYL1).